The primary structure comprises 420 residues: Cytochrome c biogenesis protein Ccs1 (420 aa).

3 helical membrane-spanning segments follow: residues 12 to 32 (LRFS…GTVI), 71 to 91 (TWWF…CTFL), and 157 to 177 (IAPI…IVGS).

The protein belongs to the Ccs1/CcsB family. In terms of assembly, may interact with CcsA.

It is found in the plastid. The protein resides in the chloroplast thylakoid membrane. Its function is as follows. Required during biogenesis of c-type cytochromes (cytochrome c6 and cytochrome f) at the step of heme attachment. In Phaeodactylum tricornutum (strain CCAP 1055/1), this protein is Cytochrome c biogenesis protein Ccs1.